The following is a 351-amino-acid chain: S-adenosylmethionine:tRNA ribosyltransferase-isomerase (351 aa).

Belongs to the QueA family. In terms of assembly, monomer.

The protein localises to the cytoplasm. The catalysed reaction is 7-aminomethyl-7-carbaguanosine(34) in tRNA + S-adenosyl-L-methionine = epoxyqueuosine(34) in tRNA + adenine + L-methionine + 2 H(+). The protein operates within tRNA modification; tRNA-queuosine biosynthesis. Transfers and isomerizes the ribose moiety from AdoMet to the 7-aminomethyl group of 7-deazaguanine (preQ1-tRNA) to give epoxyqueuosine (oQ-tRNA). In Acinetobacter baumannii (strain SDF), this protein is S-adenosylmethionine:tRNA ribosyltransferase-isomerase.